The following is a 687-amino-acid chain: Glycine--tRNA ligase beta subunit (687 aa).

The protein belongs to the class-II aminoacyl-tRNA synthetase family. Tetramer of two alpha and two beta subunits.

It localises to the cytoplasm. The enzyme catalyses tRNA(Gly) + glycine + ATP = glycyl-tRNA(Gly) + AMP + diphosphate. This chain is Glycine--tRNA ligase beta subunit, found in Lactobacillus helveticus (strain DPC 4571).